Here is a 146-residue protein sequence, read N- to C-terminus: MALSQVSASLAFSLPNSGALKLATITNPTSTCRVHVPQLAGIRSTFASGSPLLPLKLSMTRRGGNRAASVSIRSEQSTEGSSGLDIWLGRGAMVGFAVAITVEISTGKGLLENFGVASPLPTVALAVTALVGVLAAVFIFQSSSKN.

A chloroplast-targeting transit peptide spans 1-73; sequence MALSQVSASL…GNRAASVSIR (73 aa). 2 helical membrane-spanning segments follow: residues 84–104 and 120–140; these read LDIW…TVEI and LPTV…VFIF.

This sequence belongs to the ELIP/psbS family.

Its subcellular location is the plastid. It localises to the chloroplast thylakoid membrane. Its function is as follows. May be involved in non-photochemical quenching, a process that maintains the balance between dissipation and utilization of light energy to minimize generation of oxidizing molecules, thereby protecting the plant against photo-oxidative damage. May play a photoprotective role in the thylakoid membrane in response to light stress. In Arabidopsis thaliana (Mouse-ear cress), this protein is Stress enhanced protein 1, chloroplastic.